A 315-amino-acid polypeptide reads, in one-letter code: Ribosomal RNA large subunit methyltransferase F (315 aa).

This sequence belongs to the methyltransferase superfamily. METTL16/RlmF family.

It localises to the cytoplasm. The catalysed reaction is adenosine(1618) in 23S rRNA + S-adenosyl-L-methionine = N(6)-methyladenosine(1618) in 23S rRNA + S-adenosyl-L-homocysteine + H(+). Specifically methylates the adenine in position 1618 of 23S rRNA. This chain is Ribosomal RNA large subunit methyltransferase F, found in Aeromonas salmonicida (strain A449).